The primary structure comprises 57 residues: U17-myrmicitoxin-Tb1a (57 aa).

The N-terminal stretch at 1–29 is a signal peptide; sequence MEKNRTNIFSVYLMITFLLISIFITMVMS. Positions 30-33 are excised as a propeptide; sequence DGEA. Cys-42 and Cys-53 are joined by a disulfide. Ala-56 is modified (alanine amide).

Post-translationally, O-glycosylated. As to expression, expressed by the venom gland.

It is found in the secreted. Functionally, serine protease inhibitor which exhibits antifibrinolytic, antielastolytic and antimicrobial activities. Displays antimicrobial activity against bacteria and fungi. Likely functions in the innate immune response to microbial infection and possibly in the venom, as an antifibrinolytic agent. The sequence is that of U17-myrmicitoxin-Tb1a from Tetramorium bicarinatum (Tramp ant).